The following is a 79-amino-acid chain: Putative membrane protein insertion efficiency factor (79 aa).

The protein belongs to the UPF0161 family.

It is found in the cell inner membrane. Could be involved in insertion of integral membrane proteins into the membrane. This is Putative membrane protein insertion efficiency factor from Prochlorococcus marinus (strain SARG / CCMP1375 / SS120).